The following is a 257-amino-acid chain: Imidazole glycerol phosphate synthase subunit HisF (257 aa).

Active-site residues include D12 and D131.

The protein belongs to the HisA/HisF family. In terms of assembly, heterodimer of HisH and HisF.

The protein localises to the cytoplasm. The catalysed reaction is 5-[(5-phospho-1-deoxy-D-ribulos-1-ylimino)methylamino]-1-(5-phospho-beta-D-ribosyl)imidazole-4-carboxamide + L-glutamine = D-erythro-1-(imidazol-4-yl)glycerol 3-phosphate + 5-amino-1-(5-phospho-beta-D-ribosyl)imidazole-4-carboxamide + L-glutamate + H(+). It functions in the pathway amino-acid biosynthesis; L-histidine biosynthesis; L-histidine from 5-phospho-alpha-D-ribose 1-diphosphate: step 5/9. Functionally, IGPS catalyzes the conversion of PRFAR and glutamine to IGP, AICAR and glutamate. The HisF subunit catalyzes the cyclization activity that produces IGP and AICAR from PRFAR using the ammonia provided by the HisH subunit. The chain is Imidazole glycerol phosphate synthase subunit HisF from Cellvibrio japonicus (strain Ueda107) (Pseudomonas fluorescens subsp. cellulosa).